A 298-amino-acid chain; its full sequence is Lipoyl synthase (298 aa).

Cysteine 40, cysteine 45, cysteine 51, cysteine 67, cysteine 71, cysteine 74, and serine 280 together coordinate [4Fe-4S] cluster. One can recognise a Radical SAM core domain in the interval 53–269 (AVRKTATFMI…KEIALSKGFS (217 aa)).

Belongs to the radical SAM superfamily. Lipoyl synthase family. [4Fe-4S] cluster is required as a cofactor.

It localises to the cytoplasm. It carries out the reaction [[Fe-S] cluster scaffold protein carrying a second [4Fe-4S](2+) cluster] + N(6)-octanoyl-L-lysyl-[protein] + 2 oxidized [2Fe-2S]-[ferredoxin] + 2 S-adenosyl-L-methionine + 4 H(+) = [[Fe-S] cluster scaffold protein] + N(6)-[(R)-dihydrolipoyl]-L-lysyl-[protein] + 4 Fe(3+) + 2 hydrogen sulfide + 2 5'-deoxyadenosine + 2 L-methionine + 2 reduced [2Fe-2S]-[ferredoxin]. Its pathway is protein modification; protein lipoylation via endogenous pathway; protein N(6)-(lipoyl)lysine from octanoyl-[acyl-carrier-protein]. Its function is as follows. Catalyzes the radical-mediated insertion of two sulfur atoms into the C-6 and C-8 positions of the octanoyl moiety bound to the lipoyl domains of lipoate-dependent enzymes, thereby converting the octanoylated domains into lipoylated derivatives. The chain is Lipoyl synthase from Bacillus anthracis (strain A0248).